The following is a 753-amino-acid chain: Rho guanine nucleotide exchange factor gef1 (753 aa).

Disordered stretches follow at residues 52 to 150 (SNSY…DRNR), 175 to 194 (TLRKIHTNTSSNGTSRRVSG), and 200 to 245 (AQNS…ASLL). Composition is skewed to polar residues over residues 94–105 (DPQTPNTPPVSS), 114–141 (GSFNLPNSNMSHSLNGDSTASNSSTLTP), 181–191 (TNTSSNGTSRR), and 200–220 (AQNSSETSSNRTSAYLPGSST). Low complexity predominate over residues 230–245 (TLASMPSSHSSTASLL). A DH domain is found at 311 to 507 (KRANLIKELV…QELISGINQK (197 aa)).

Interacts with cdc42.

The protein resides in the cytoplasm. In terms of biological role, has a role in the control of cell polarity and cytokinesis. Involved in bipolar growth, via modulation of cdc42-shk1-orb6 signaling, and septum formation. Stimulates guanine nucleotide exchange of cdc42. This chain is Rho guanine nucleotide exchange factor gef1 (gef1), found in Schizosaccharomyces pombe (strain 972 / ATCC 24843) (Fission yeast).